A 39-amino-acid chain; its full sequence is Alpha-conotoxin ArIA (39 aa).

Positions 1–17 (SDGRNVAAKAFHRIGRT) are excised as a propeptide. Intrachain disulfides connect Cys22–Cys28 and Cys23–Cys36. The interval 24–26 (SNP) is ser-Xaa-Pro motif, crucial for potent interaction with nAChR. Pro33 carries the 4-hydroxyproline; in ArIA modification.

It belongs to the conotoxin A superfamily. In terms of tissue distribution, expressed by the venom duct.

The protein resides in the secreted. Functionally, alpha-conotoxins act on postsynaptic membranes, they bind to the nicotinic acetylcholine receptors (nAChR) and thus inhibit them. This toxin acts as a competitive inhibitor and is 3-fold more potent on alpha-7/CHRNA7 nAChRs (IC(50)=6 nM) than on alpha-3-beta-2/CHRNA3-CHRNB2 nAChR (IC(50)=18 nM). In terms of biological role, acts as a competitive inhibitor and is 33-fold more potent on alpha-7/CHRNA7 nAChRs (IC(50)=1.8 nM) than on alpha-3-beta-2/CHRNA3-CHRNB2 nAChR (IC(50)=60.1 nM). This Conus arenatus (Sand-dusted cone) protein is Alpha-conotoxin ArIA.